Consider the following 511-residue polypeptide: Centrosomal protein CCDC61 (511 aa).

Met-1 carries the post-translational modification N-acetylmethionine. Residues 1 to 143 form a head domain region; sequence MDQPAGLQVD…PLPLPYQGKP (143 aa). 2 coiled-coil regions span residues 176–203 and 246–273; these read IWHL…SREE and SRRL…LNSE. The residue at position 283 (Thr-283) is a Phosphothreonine. 2 disordered regions span residues 284–413 and 429–476; these read LPPV…DSFR and SHSV…GGWV. Residues 290 to 302 are compositionally biased toward basic and acidic residues; sequence REGRASSSRERST. 2 positions are modified to phosphoserine: Ser-330 and Ser-332. Low complexity predominate over residues 360–369; sequence KQQQQQRNRM. A phosphoserine mark is found at Ser-371 and Ser-374. Positions 433–442 are enriched in basic residues; that stretch reads SRSRRCRGRG. Position 446 is a phosphoserine (Ser-446). Polar residues predominate over residues 449–458; the sequence is PWSRSKTKST. A Phosphoserine modification is found at Ser-472.

Belongs to the CCDC61 family. In terms of assembly, forms homodimers (via head domain). Interacts with CEP170. Interacts with PCM1 and CEP131. Binds tubulin.

Its subcellular location is the cytoplasm. The protein resides in the cytoskeleton. It localises to the microtubule organizing center. The protein localises to the centrosome. It is found in the centriolar satellite. Its subcellular location is the cilium basal body. Functionally, microtubule-binding centrosomal protein required for centriole cohesion, independently of the centrosome-associated protein/CEP250 and rootletin/CROCC linker. In interphase, required for anchoring microtubule at the mother centriole subdistal appendages and for centrosome positioning. During mitosis, may be involved in spindle assembly and chromatin alignment by regulating the organization of spindle microtubules into a symmetrical structure. Plays a non-essential role in ciliogenesis. The polypeptide is Centrosomal protein CCDC61 (Mus musculus (Mouse)).